The sequence spans 710 residues: Zinc finger and BTB domain-containing protein 24 (710 aa).

A BTB domain is found at 37 to 103 (CDITLIVENV…IYTGYLHASE (67 aa)). 2 disordered regions span residues 134 to 176 (APKP…EGRS) and 202 to 256 (EEDS…SRRR). Positions 159 to 171 (KRKRGRPRKANGL) form a DNA-binding region, a.T hook. Basic and acidic residues-rich tracts occupy residues 202-219 (EEDS…KESE) and 231-244 (PAEK…KAGD). C2H2-type zinc fingers lie at residues 293–315 (ARCK…QRRH), 321–343 (FKCN…TRMH), 349–371 (YTCT…MSLH), 377–399 (FTCD…YRVH), 405–427 (PECS…LRTH), 433–455 (FTCE…IRIH), 461–483 (YSCS…CILH), and 489–511 (FSCP…LKIH). A disordered region spans residues 651–676 (EQTTSSVPAADTGARATPVPSTRPGA).

This sequence belongs to the krueppel C2H2-type zinc-finger protein family. In terms of assembly, interacts with MN1. Widely expressed. Highest level in liver, testis and kidney.

It localises to the nucleus. Its function is as follows. May be involved in BMP2-induced transcription. The polypeptide is Zinc finger and BTB domain-containing protein 24 (Zbtb24) (Mus musculus (Mouse)).